The primary structure comprises 343 residues: LRP2-binding protein (343 aa).

The stretch at 58-91 (SQATFLLGQLHYVQGCYAEAELIFDRIKDKDPQA) is one TPR repeat. Sel1-like repeat units lie at residues 92 to 124 (LYQLAVIYYDGLGTKEDLGRAVEYMGRVAFWDS), 132 to 167 (YAALYNLGQAYLEGFGVQASSSEAERLWLLAADNGN), 172 to 205 (VKAQSALGMFYSRPESLDLRKAFFWHSQACGNGS), 206 to 241 (LESQAALGLMYLYGHGVQRDSDSALFCLKEAAERGS), 242 to 273 (VYAQGHLTACYYRRQLYSRAAALGQRVCEYKD), and 293 to 328 (AIGMFYYARCLHLGRGVPQNRDKAKHYCTQAVRIDP).

Its subcellular location is the cytoplasm. Functionally, may act as an adapter that regulates LRP2 function. The polypeptide is LRP2-binding protein (lrp2bp) (Danio rerio (Zebrafish)).